A 92-amino-acid chain; its full sequence is Small ribosomal subunit protein uS19c (92 aa).

The protein belongs to the universal ribosomal protein uS19 family.

It localises to the plastid. It is found in the chloroplast. In terms of biological role, protein S19 forms a complex with S13 that binds strongly to the 16S ribosomal RNA. The sequence is that of Small ribosomal subunit protein uS19c from Manihot esculenta (Cassava).